The chain runs to 114 residues: Fumarate reductase subunit D (114 aa).

3 consecutive transmembrane segments (helical) span residues 24 to 44 (VSAIFLPVVILIIGLLLPFGL), 50 to 70 (LITFAYSWIGKLVILVLTIFP), and 92 to 112 (GGFIFYGLATIYTVWVLFAVI).

The protein belongs to the FrdD family. In terms of assembly, part of an enzyme complex containing four subunits: a flavoprotein (FrdA), an iron-sulfur protein (FrdB), and two hydrophobic anchor proteins (FrdC and FrdD).

The protein resides in the cell inner membrane. Functionally, anchors the catalytic components of the fumarate reductase complex to the cell membrane, binds quinones. This chain is Fumarate reductase subunit D, found in Haemophilus influenzae (strain 86-028NP).